Reading from the N-terminus, the 213-residue chain is Pyrrolidone-carboxylate peptidase (213 aa).

Catalysis depends on residues E81, C144, and H166.

It belongs to the peptidase C15 family. In terms of assembly, homotetramer.

The protein localises to the cytoplasm. It carries out the reaction Release of an N-terminal pyroglutamyl group from a polypeptide, the second amino acid generally not being Pro.. Its function is as follows. Removes 5-oxoproline from various penultimate amino acid residues except L-proline. The chain is Pyrrolidone-carboxylate peptidase from Pseudomonas fluorescens (strain SBW25).